Reading from the N-terminus, the 523-residue chain is NEDD8-activating enzyme E1 regulatory subunit AXL (523 aa).

Belongs to the ubiquitin-activating E1 family. ULA1 subfamily. Heterodimer of ECR1 and AXL1. The complex binds to RUB1/NEDD8 and RCE1.

It localises to the nucleus. It functions in the pathway protein modification; protein neddylation. Regulatory subunit of the dimeric ECR1-AXL1 E1 enzyme. E1 activates RUB1/NEDD8 by first adenylating its C-terminal glycine residue with ATP, thereafter linking this residue to the side chain of the catalytic cysteine, yielding a RUB1-ECR1 thioester and free AMP. E1 finally transfers RUB1 to the catalytic cysteine of RCE1. May function redundantly with AXR1 in the RUB conjugating pathway. Seems not to be functionally equivalent to AXR1 in vivo. This is NEDD8-activating enzyme E1 regulatory subunit AXL from Arabidopsis thaliana (Mouse-ear cress).